The chain runs to 827 residues: Cell surface glycoprotein (827 aa).

A signal peptide spans 1–34 (MTKLKDQTRAILLATLMVTSVFAGAIAFTGSAAA). A glycan (N-linked (Glc...) asparagine) is linked at N47. Over residues 73–102 (PLLTGTAGNSEGVSLDLSSPIPQTTENQPL) the composition is skewed to polar residues. Positions 73–111 (PLLTGTAGNSEGVSLDLSSPIPQTTENQPLGTYDVDGSG) are disordered. N117, N308, N313, N532, and N766 each carry an N-linked (Glc...) asparagine glycan. The interval 755-804 (SEREDTTTSSDNATDTTTTTDGPTETTTTAEPTETTEEPTEETTTSSNTP) is disordered. Positions 761-787 (TTSSDNATDTTTTTDGPTETTTTAEPT) are enriched in low complexity. Positions 804 to 806 (PGF) match the PGF sorting signal motif. Residues 804–823 (PGFGIAVALVALVGAALLAL) traverse the membrane as a helical segment.

The protein belongs to the halobacterial S-layer protein family. In terms of processing, O-glycosylated on 4 to 6 threonine residues; glycans consist of Glc-Gal disaccharides. Post-translationally, the N-terminus is not blocked. Cleaved by the archaeosortase ArtA at the C-terminus, with removal of a short hydrophobic segment. In terms of processing, lipidation: Following protein translocation across the membrane, the protein is modified by a derivative of mevalonic acid. Lipid modification is ArtA-dependent and requires the conserved C-terminal PGF motif. Post-translationally, asn-47 and Asn-117 are glycosylated by a pentasaccharide comprising a hexose, 2 hexuronic acids, a methyl ester of a hexuronic acid and mannose. The pentasaccharide is produced in 2 steps: first, a tetrasaccharide is built on dolichol-P and then transferred to the S-layer glycoprotein. Then, the mannose fifth sugar is attached to a distinct molecule of dolichol-P and is transferred to the protein already carrying the tetrasaccharide. The pentasaccharide on Asn-47 was initially thought to contain mannose, galactose, glucose and idose with a relative ratio of 1/3/3/0.2. However, it was later shown that it is not the case. Under low-salt conditions (1.75 M instead of 3.4 M), a tetrasaccharide consisting of a sulfated hexose, 2 hexoses and rhamnose is attached to Asn-532.

Its subcellular location is the secreted. The protein resides in the cell wall. It is found in the S-layer. It localises to the cell membrane. In terms of biological role, S-layer protein. The S-layer is a paracrystalline mono-layered assembly of proteins which coat the surface of the cell. The protein is Cell surface glycoprotein (csg) of Haloferax volcanii (strain ATCC 29605 / DSM 3757 / JCM 8879 / NBRC 14742 / NCIMB 2012 / VKM B-1768 / DS2) (Halobacterium volcanii).